We begin with the raw amino-acid sequence, 201 residues long: Snake venom metalloproteinase trimerelysin-2 (201 aa).

Pyrrolidone carboxylic acid is present on glutamine 1. Residues 6-201 (RYIELAIVVD…YNPQCILNAP (196 aa)) enclose the Peptidase M12B domain. A glycan (N-linked (GlcNAc...) asparagine) is linked at asparagine 72. Intrachain disulfides connect cysteine 117–cysteine 196, cysteine 158–cysteine 180, and cysteine 160–cysteine 163. Histidine 142 provides a ligand contact to Zn(2+). The active site involves glutamate 143. Positions 146 and 152 each coordinate Zn(2+).

It belongs to the venom metalloproteinase (M12B) family. P-I subfamily. In terms of assembly, monomer. Zn(2+) is required as a cofactor. Expressed by the venom gland.

It localises to the secreted. It carries out the reaction Cleavage of 3-Asn-|-Gln-4, 10-His-|-Leu-11 and 14-Ala-|-Leu-15 in the insulin B chain, and the bond Z-Gly-Pro-|-Leu-Gly-Pro in a small molecule substrate of microbial collagenase.. Major venom non-hemorrhagic metalloproteinase. This is Snake venom metalloproteinase trimerelysin-2 from Protobothrops flavoviridis (Habu).